Reading from the N-terminus, the 563-residue chain is Sulfite reductase [NADPH] hemoprotein beta-component (563 aa).

Residues Cys427, Cys433, Cys472, and Cys476 each coordinate [4Fe-4S] cluster. Cys476 is a binding site for siroheme.

It belongs to the nitrite and sulfite reductase 4Fe-4S domain family. Alpha(8)-beta(8). The alpha component is a flavoprotein, the beta component is a hemoprotein. Requires siroheme as cofactor. [4Fe-4S] cluster serves as cofactor.

The enzyme catalyses hydrogen sulfide + 3 NADP(+) + 3 H2O = sulfite + 3 NADPH + 4 H(+). It participates in sulfur metabolism; hydrogen sulfide biosynthesis; hydrogen sulfide from sulfite (NADPH route): step 1/1. Functionally, component of the sulfite reductase complex that catalyzes the 6-electron reduction of sulfite to sulfide. This is one of several activities required for the biosynthesis of L-cysteine from sulfate. The polypeptide is Sulfite reductase [NADPH] hemoprotein beta-component (Shewanella frigidimarina (strain NCIMB 400)).